The primary structure comprises 430 residues: V-type ATP synthase beta chain 1 (430 aa).

Belongs to the ATPase alpha/beta chains family.

In terms of biological role, produces ATP from ADP in the presence of a proton gradient across the membrane. The V-type beta chain is a regulatory subunit. This is V-type ATP synthase beta chain 1 (atpB1) from Treponema pallidum (strain Nichols).